The sequence spans 387 residues: Protein RecA (387 aa).

78 to 85 (GPESSGKT) contacts ATP. The span at 355–369 (KSIERDTKETKETKS) shows a compositional bias: basic and acidic residues. Residues 355-387 (KSIERDTKETKETKSKQPVSFSTEADGDIAVGE) are disordered.

It belongs to the RecA family.

It localises to the cytoplasm. Can catalyze the hydrolysis of ATP in the presence of single-stranded DNA, the ATP-dependent uptake of single-stranded DNA by duplex DNA, and the ATP-dependent hybridization of homologous single-stranded DNAs. It interacts with LexA causing its activation and leading to its autocatalytic cleavage. The chain is Protein RecA from Leptospira biflexa serovar Patoc (strain Patoc 1 / ATCC 23582 / Paris).